A 181-amino-acid chain; its full sequence is 6,7-dimethyl-8-ribityllumazine synthase 2 (181 aa).

The tract at residues 1–23 (MSLPMTETVTDPAETAPPTAERS) is disordered. Residues W40, 74–76 (SFE), 98–100 (LVV), and S129 each bind 5-amino-6-(D-ribitylamino)uracil.

This sequence belongs to the DMRL synthase family.

The catalysed reaction is (2S)-2-hydroxy-3-oxobutyl phosphate + 5-amino-6-(D-ribitylamino)uracil = 6,7-dimethyl-8-(1-D-ribityl)lumazine + phosphate + 2 H2O + H(+). The protein operates within cofactor biosynthesis; riboflavin biosynthesis; riboflavin from 2-hydroxy-3-oxobutyl phosphate and 5-amino-6-(D-ribitylamino)uracil: step 1/2. Catalyzes the formation of 6,7-dimethyl-8-ribityllumazine by condensation of 5-amino-6-(D-ribitylamino)uracil with 3,4-dihydroxy-2-butanone 4-phosphate. This is the penultimate step in the biosynthesis of riboflavin. The polypeptide is 6,7-dimethyl-8-ribityllumazine synthase 2 (Rhodopseudomonas palustris (strain ATCC BAA-98 / CGA009)).